Consider the following 104-residue polypeptide: UPF0235 protein RBE_0633 (104 aa).

Belongs to the UPF0235 family.

The chain is UPF0235 protein RBE_0633 from Rickettsia bellii (strain RML369-C).